Here is a 292-residue protein sequence, read N- to C-terminus: tRNA-splicing endonuclease (292 aa).

Active-site residues include tyrosine 231, histidine 238, and lysine 267.

Belongs to the tRNA-intron endonuclease family. Archaeal long subfamily. As to quaternary structure, homodimer.

It carries out the reaction pretRNA = a 3'-half-tRNA molecule with a 5'-OH end + a 5'-half-tRNA molecule with a 2',3'-cyclic phosphate end + an intron with a 2',3'-cyclic phosphate and a 5'-hydroxyl terminus.. Its function is as follows. Endonuclease that removes tRNA introns. Cleaves pre-tRNA at the 5'- and 3'-splice sites to release the intron. The products are an intron and two tRNA half-molecules bearing 2',3' cyclic phosphate and 5'-OH termini. Recognizes a pseudosymmetric substrate in which 2 bulged loops of 3 bases are separated by a stem of 4 bp. The chain is tRNA-splicing endonuclease from Thermoplasma volcanium (strain ATCC 51530 / DSM 4299 / JCM 9571 / NBRC 15438 / GSS1).